We begin with the raw amino-acid sequence, 504 residues long: Pentatricopeptide repeat-containing protein At5g16640, mitochondrial (504 aa).

Residues 1-43 constitute a mitochondrion transit peptide; the sequence is MRRSISSKAKSFLHRNLLYSGNSGTSPSSSFSICGFCFSRRAY. 13 PPR repeats span residues 45–79, 80–114, 115–149, 150–184, 185–219, 220–254, 255–289, 290–324, 325–359, 360–394, 395–429, 430–464, and 465–499; these read NGSD…RPLP, SIAD…GIPH, NLCT…GHEP, SIVT…GYKP, NVVI…GIGP, DVVT…EIYP, DVFT…SLDP, DIVT…GCFP, DVVT…GVVR, NTVT…GVHP, NIIT…GMDA, DIVT…GLMP, and DIWT…GILP.

It belongs to the PPR family. P subfamily.

Its subcellular location is the mitochondrion. In Arabidopsis thaliana (Mouse-ear cress), this protein is Pentatricopeptide repeat-containing protein At5g16640, mitochondrial.